An 82-amino-acid chain; its full sequence is Turripeptide OL139 (82 aa).

Residues 58-82 form a disordered region; that stretch reads HRTTRDTADKTHGGSQRDRFFQSIA.

Post-translationally, contains 6 disulfide bonds. In terms of tissue distribution, expressed by the venom duct.

The protein resides in the secreted. Acts as a neurotoxin by inhibiting an ion channel. This chain is Turripeptide OL139, found in Iotyrris olangoensis (Sea snail).